We begin with the raw amino-acid sequence, 137 residues long: Nucleoside diphosphate kinase (137 aa).

6 residues coordinate ATP: lysine 9, phenylalanine 57, arginine 85, threonine 91, arginine 102, and asparagine 112. Histidine 115 acts as the Pros-phosphohistidine intermediate in catalysis.

Belongs to the NDK family. In terms of assembly, homotetramer. Mg(2+) serves as cofactor.

It localises to the cytoplasm. It catalyses the reaction a 2'-deoxyribonucleoside 5'-diphosphate + ATP = a 2'-deoxyribonucleoside 5'-triphosphate + ADP. The catalysed reaction is a ribonucleoside 5'-diphosphate + ATP = a ribonucleoside 5'-triphosphate + ADP. Its function is as follows. Major role in the synthesis of nucleoside triphosphates other than ATP. The ATP gamma phosphate is transferred to the NDP beta phosphate via a ping-pong mechanism, using a phosphorylated active-site intermediate. The chain is Nucleoside diphosphate kinase from Thermus thermophilus (strain ATCC BAA-163 / DSM 7039 / HB27).